We begin with the raw amino-acid sequence, 43 residues long: Protein PsbN (43 aa).

The helical transmembrane segment at 7-27 threads the bilayer; the sequence is ITIFLSCFLVGVTGYALYTAF.

It belongs to the PsbN family.

It localises to the plastid. The protein resides in the chloroplast thylakoid membrane. May play a role in photosystem I and II biogenesis. The sequence is that of Protein PsbN from Klebsormidium bilatum (Filamentous green alga).